A 290-amino-acid polypeptide reads, in one-letter code: Signal peptidase I (290 aa).

Residues 1–13 (MKFLRSVYAFCSS) are Cytoplasmic-facing. The helical transmembrane segment at 14–34 (WVGTIVIVLLVIFFIAQAFII) threads the bilayer. At 35 to 290 (PSRSMVGTLY…KIIKKENATH (256 aa)) the chain is on the extracellular side. Residues Ser-38 and Lys-106 contribute to the active site.

The protein belongs to the peptidase S26 family.

Its subcellular location is the cell membrane. The enzyme catalyses Cleavage of hydrophobic, N-terminal signal or leader sequences from secreted and periplasmic proteins.. The protein is Signal peptidase I (lepB) of Helicobacter pylori (strain ATCC 700392 / 26695) (Campylobacter pylori).